We begin with the raw amino-acid sequence, 1273 residues long: Ribulose bisphosphate carboxylase small subunit, chloroplastic (1273 aa).

The transit peptide at 1–134 (MPFDRQPLLS…AVLPFTSEKD (134 aa)) directs the protein to the chloroplast. 7 propeptides span residues 269–278 (GMAAMTGEKD), 412–421 (GMAAMTGEKD), 556–565 (GMAAMTGEKD), 699–708 (GMAAMTGEKD), 844–853 (GMAAMTGEKE), 987–996 (GMAAMTGEKD), and 1131–1140 (GMAAMTGEKE).

The protein belongs to the RuBisCO small chain family. As to quaternary structure, heterohexadecamer of 8 large and 8 small subunits. In terms of processing, eight small subunits are processed from a large polyprotein. All start with the same sequence but there is more heterogeneity at the C-terminus.

It is found in the plastid. The protein resides in the chloroplast. RuBisCO catalyzes two reactions: the carboxylation of D-ribulose 1,5-bisphosphate, the primary event in carbon dioxide fixation, as well as the oxidative fragmentation of the pentose substrate. Both reactions occur simultaneously and in competition at the same active site. Although the small subunit is not catalytic it is essential for maximal activity. This is Ribulose bisphosphate carboxylase small subunit, chloroplastic from Euglena gracilis.